The chain runs to 371 residues: N-acetyldiaminopimelate deacetylase (371 aa).

D68 is a catalytic residue. Residue E127 is the Proton acceptor of the active site.

It belongs to the peptidase M20A family. N-acetyldiaminopimelate deacetylase subfamily.

It carries out the reaction N-acetyl-(2S,6S)-2,6-diaminopimelate + H2O = (2S,6S)-2,6-diaminopimelate + acetate. The protein operates within amino-acid biosynthesis; L-lysine biosynthesis via DAP pathway; LL-2,6-diaminopimelate from (S)-tetrahydrodipicolinate (acetylase route): step 3/3. Catalyzes the conversion of N-acetyl-diaminopimelate to diaminopimelate and acetate. This is N-acetyldiaminopimelate deacetylase from Listeria monocytogenes serotype 4b (strain CLIP80459).